A 435-amino-acid polypeptide reads, in one-letter code: GTPase Der (435 aa).

EngA-type G domains follow at residues 4-167 and 175-350; these read PVVA…GDKA and IRFS…ENQT. GTP-binding positions include 10-17, 57-61, 119-122, 181-188, 228-232, and 293-296; these read GRPNVGKS, DTGGI, NKAD, DTAGI, and NKWD. The region spanning 351–435 is the KH-like domain; sequence RRIQSSVLND…PIKILARKRK (85 aa).

This sequence belongs to the TRAFAC class TrmE-Era-EngA-EngB-Septin-like GTPase superfamily. EngA (Der) GTPase family. As to quaternary structure, associates with the 50S ribosomal subunit.

GTPase that plays an essential role in the late steps of ribosome biogenesis. The sequence is that of GTPase Der from Lactobacillus johnsonii (strain CNCM I-12250 / La1 / NCC 533).